The sequence spans 377 residues: DNA replication and repair protein RecF (377 aa).

30-37 serves as a coordination point for ATP; the sequence is GQNAQGKS.

This sequence belongs to the RecF family.

The protein localises to the cytoplasm. Functionally, the RecF protein is involved in DNA metabolism; it is required for DNA replication and normal SOS inducibility. RecF binds preferentially to single-stranded, linear DNA. It also seems to bind ATP. In Cyanothece sp. (strain PCC 7425 / ATCC 29141), this protein is DNA replication and repair protein RecF.